A 186-amino-acid polypeptide reads, in one-letter code: MELEAVLKERTAAAGDPGRVLGAWVRSGWSAAGPSVLESEGGSGGPLAFESTSSRILELASKDNEPEYEALPDGSNVTTHMLAGAVAGVMEHCLMYPVDCVKTRMQSLQPDPAARYRNVMDALSKIVRTEGFWRPLRGLNVTATGAGPAHALYFACYEKLKKTLSDIIHPGGNSHIANGTDYSCPA.

One copy of the Solcar repeat lies at 75 to 163 (SNVTTHMLAG…FACYEKLKKT (89 aa)). 3 helical membrane-spanning segments follow: residues 77 to 96 (VTTH…CLMY), 137 to 157 (RGLN…FACY), and 172 to 185 (GNSH…YSCP).

The protein belongs to the mitochondrial carrier (TC 2.A.29) family.

The protein resides in the mitochondrion inner membrane. The enzyme catalyses Fe(2+)(in) = Fe(2+)(out). In terms of biological role, mitochondrial iron transporter that mediates iron uptake. Probably required for heme synthesis of hemoproteins and Fe-S cluster assembly in non-erythroid cells. The protein is Mitoferrin-2A (slc25a28-a) of Xenopus laevis (African clawed frog).